The primary structure comprises 622 residues: MSTEHKQSLSAVTLAAIGVVYGDIGTSPLYTLRECFSGHYGFDVRPDVVFGFLSLIFWMLILVVSVKYLTYVMRADNAGEGGILTLMSLAGRNTSSRATSILVVLGLIGGSFFYGEVVITPAISVMSAIEGLEIAAPALDPYIVPCSIAVLTLLFVIQKHGTGSVGKLFAPVMLVWFLTLALLGLRSIIANPEVLAALNPKWAISFFVEYKSVSFFALGAVVLAITGVEALYADMGHFGKFPIRLAWFTVVLPSLVLNYFGQGALLLKNPEAIKNPFFLLAPDWALIPLLILATLATVIASQAVISGVFSLTRQAVRLGYLPPMRIIHTSEMESGQIYIPVINWTLYLAVVLVIIGFERSSNLAAAYGIAVTGTMVITSILFCTVAWKNWHWNRFLVAFLLMVLLIIDIPMFSANVLKLFSGGWLPLSLGLVMFIIMTTWKSERFSLLRRMHEHSNSLEAMIASLEKSPPVRVPGTAVYMSRAMNVIPFALLHNLKHNKVLHERVVLLTMRTDDVPYVHNVERVTIEQLSPTFWRVVARYGWRETPNVAEIFHRCGLEGLSCQMMETSFFMSHESLILTKRPWHLFLRGKLFIALSRNALRAPDQFEIPPNRVIELGTQVEI.

12 helical membrane-spanning segments follow: residues 9 to 29 (LSAVTLAAIGVVYGDIGTSPL), 46 to 66 (PDVVFGFLSLIFWMLILVVSV), 101 to 121 (ILVVLGLIGGSFFYGEVVITP), 137 to 157 (PALDPYIVPCSIAVLTLLFVI), 165 to 185 (VGKLFAPVMLVWFLTLALLGL), 213 to 233 (VSFFALGAVVLAITGVEALYA), 247 to 267 (WFTVVLPSLVLNYFGQGALLL), 276 to 296 (PFFLLAPDWALIPLLILATLA), 337 to 357 (IYIPVINWTLYLAVVLVIIGF), 363 to 383 (LAAAYGIAVTGTMVITSILFC), 395 to 415 (FLVAFLLMVLLIIDIPMFSAN), and 416 to 436 (VLKLFSGGWLPLSLGLVMFII).

Belongs to the HAK/KUP transporter (TC 2.A.72) family.

It is found in the cell inner membrane. The enzyme catalyses K(+)(in) + H(+)(in) = K(+)(out) + H(+)(out). Functionally, responsible for the low-affinity transport of potassium into the cell. Likely operates as a K(+):H(+) symporter. The chain is Low affinity potassium transport system protein Kup from Yersinia pseudotuberculosis serotype O:1b (strain IP 31758).